The chain runs to 374 residues: Methylthioribose-1-phosphate isomerase (374 aa).

The Proton donor role is filled by aspartate 256.

Belongs to the eIF-2B alpha/beta/delta subunits family. MtnA subfamily.

It is found in the cytoplasm. The protein localises to the nucleus. It carries out the reaction 5-(methylsulfanyl)-alpha-D-ribose 1-phosphate = 5-(methylsulfanyl)-D-ribulose 1-phosphate. It functions in the pathway amino-acid biosynthesis; L-methionine biosynthesis via salvage pathway; L-methionine from S-methyl-5-thio-alpha-D-ribose 1-phosphate: step 1/6. Functionally, catalyzes the interconversion of methylthioribose-1-phosphate (MTR-1-P) into methylthioribulose-1-phosphate (MTRu-1-P). This chain is Methylthioribose-1-phosphate isomerase, found in Leishmania braziliensis.